We begin with the raw amino-acid sequence, 534 residues long: MASSSIASFAPFESYSPPLNTSETSLISVQLTQDGLDYHGALAFLCGALLFGFVYSVFYNLYLSPIARVPGPLIAQVSPLWLMRAVCRKQLNCDIKKLHEKYGKKPERSPVVRLSPTEVSFATVEAQNAIHRPGASAKQGLFFTKEGTLEAMMGEIIWPATNLLTATVPEEHQRLKKALQPAFTEKALQLQEPIQQQHTDRLIRSVQEASRQNRVVDLTPHMSQAIWDIISDLSFGEPLLKDQLAKFERLKTTFCMVSPLLEALQVLLAVPGAQTLAKACVGLVPLLFWLPTNVLPSAQLRKRFERQDSNEDFLTAIMRCREMGIQMTDMELQSNASLLVMVGYDTTATSLSATMNLLLRHPLCLQALQDELHSHFSSTSDMTSKPLSQLPILNGCIQESLRLFPPANGKGTNRTSPGTMIDGVYIPRGVNVSADMYTIQRSPTYWSRPNEFCPDRWFDNGPGTEFAQDVRSSHNPFLLGPRMCIGRAVALQSMRMLIAKLVYTFDLEAVEDYSWDLHVANSYLWTGYRCNARV.

N-linked (GlcNAc...) asparagine glycosylation is present at asparagine 20. Residues 41-61 (ALAFLCGALLFGFVYSVFYNL) form a helical membrane-spanning segment. Residues asparagine 335, asparagine 413, and asparagine 431 are each glycosylated (N-linked (GlcNAc...) asparagine). Position 484 (cysteine 484) interacts with heme.

It belongs to the cytochrome P450 family. Heme is required as a cofactor.

It localises to the membrane. It participates in secondary metabolite biosynthesis; terpenoid biosynthesis. Functionally, cytochrome P4590 monooxygenase part of the gene cluster that mediates the biosynthesis of betaestacins. The bifunctional terpene synthase btcA converts isopentenyl diphosphate (IPP) and dimethylallyl diphosphate (DMAPP) into the sesterterpene betaestacin I. The C-terminal prenyltransferase (PT) domain of btcA catalyzes formation of GFPP, whereas the N-terminal terpene cyclase (TC) domain catalyzes the cyclization of GFPP into betaestacin I. The cytochrome P450 monooxygenase btcB oxidizes the C25 methyl group of betaestacin I to yield the carboxylic acid betaestacin IV via the alcohol betaestacin III. The cytochrome P450 monooxygenase btcC further catalyzes the multistep oxidation of betaestacin IV to produce several compounds, including betaestacins Va, Vb, Vc and VI. This Colletotrichum orbiculare (strain 104-T / ATCC 96160 / CBS 514.97 / LARS 414 / MAFF 240422) (Cucumber anthracnose fungus) protein is Cytochrome P450 monooxygenase btcB.